The chain runs to 208 residues: Imidazole glycerol phosphate synthase subunit HisH (208 aa).

The Glutamine amidotransferase type-1 domain occupies 1–206; sequence MFAIVDYDTG…KEMVSANDFS (206 aa). The active-site Nucleophile is the cysteine 79. Active-site residues include histidine 181 and glutamate 183.

Heterodimer of HisH and HisF.

Its subcellular location is the cytoplasm. The catalysed reaction is 5-[(5-phospho-1-deoxy-D-ribulos-1-ylimino)methylamino]-1-(5-phospho-beta-D-ribosyl)imidazole-4-carboxamide + L-glutamine = D-erythro-1-(imidazol-4-yl)glycerol 3-phosphate + 5-amino-1-(5-phospho-beta-D-ribosyl)imidazole-4-carboxamide + L-glutamate + H(+). The enzyme catalyses L-glutamine + H2O = L-glutamate + NH4(+). The protein operates within amino-acid biosynthesis; L-histidine biosynthesis; L-histidine from 5-phospho-alpha-D-ribose 1-diphosphate: step 5/9. IGPS catalyzes the conversion of PRFAR and glutamine to IGP, AICAR and glutamate. The HisH subunit catalyzes the hydrolysis of glutamine to glutamate and ammonia as part of the synthesis of IGP and AICAR. The resulting ammonia molecule is channeled to the active site of HisF. This Lactiplantibacillus plantarum (strain ATCC BAA-793 / NCIMB 8826 / WCFS1) (Lactobacillus plantarum) protein is Imidazole glycerol phosphate synthase subunit HisH.